A 361-amino-acid chain; its full sequence is Deoxyribonuclease (361 aa).

The first 24 residues, 1-24 (MMHLLRRGAFAILLIVLLPSAALA), serve as a signal peptide directing secretion. Histidine 149 is a catalytic residue.

Belongs to the DNase I family. The cofactor is Mg(2+). Ca(2+) is required as a cofactor.

It localises to the secreted. Its function is as follows. DNA nuclease able to digest short and long DNA substrate. Is resistant to ionic strength and thus active at high salt concentration. In Thioalkalivibrio sp. (strain K90mix), this protein is Deoxyribonuclease.